A 356-amino-acid chain; its full sequence is Nuclear hormone receptor family member nhr-169 (356 aa).

A DNA-binding region (nuclear receptor) is located at residues 16–90; the sequence is DPICSVCNFS…AGMKRSLVKE (75 aa). NR C4-type zinc fingers lie at residues 19–40 and 56–72; these read CSVCNFSSLIAPHFGGLVCSAC and CKKDNQCKGMRKNCRAC. Residues 144–356 enclose the NR LBD domain; sequence DVSKILKTTP…KLYLHMGLPF (213 aa).

It belongs to the nuclear hormone receptor family.

The protein localises to the nucleus. Its function is as follows. Orphan nuclear receptor. This Caenorhabditis elegans protein is Nuclear hormone receptor family member nhr-169 (nhr-169).